Consider the following 298-residue polypeptide: ATP phosphoribosyltransferase (298 aa).

The protein belongs to the ATP phosphoribosyltransferase family. Long subfamily. It depends on Mg(2+) as a cofactor.

It is found in the cytoplasm. The catalysed reaction is 1-(5-phospho-beta-D-ribosyl)-ATP + diphosphate = 5-phospho-alpha-D-ribose 1-diphosphate + ATP. It functions in the pathway amino-acid biosynthesis; L-histidine biosynthesis; L-histidine from 5-phospho-alpha-D-ribose 1-diphosphate: step 1/9. Feedback inhibited by histidine. Catalyzes the condensation of ATP and 5-phosphoribose 1-diphosphate to form N'-(5'-phosphoribosyl)-ATP (PR-ATP). Has a crucial role in the pathway because the rate of histidine biosynthesis seems to be controlled primarily by regulation of HisG enzymatic activity. This is ATP phosphoribosyltransferase from Aeromonas hydrophila subsp. hydrophila (strain ATCC 7966 / DSM 30187 / BCRC 13018 / CCUG 14551 / JCM 1027 / KCTC 2358 / NCIMB 9240 / NCTC 8049).